Consider the following 883-residue polypeptide: Phosphoenolpyruvate carboxylase (883 aa).

Active-site residues include His-138 and Lys-546.

The protein belongs to the PEPCase type 1 family. Mg(2+) is required as a cofactor.

It carries out the reaction oxaloacetate + phosphate = phosphoenolpyruvate + hydrogencarbonate. Forms oxaloacetate, a four-carbon dicarboxylic acid source for the tricarboxylic acid cycle. The protein is Phosphoenolpyruvate carboxylase of Escherichia coli (strain 55989 / EAEC).